A 248-amino-acid polypeptide reads, in one-letter code: Probable transcriptional regulatory protein BT_2363 (248 aa).

This sequence belongs to the TACO1 family.

Its subcellular location is the cytoplasm. This is Probable transcriptional regulatory protein BT_2363 from Bartonella tribocorum (strain CIP 105476 / IBS 506).